Reading from the N-terminus, the 541-residue chain is Phenazine N-monooxygenase PhzNO1 (541 aa).

Residues aspartate 39, 47–50, 59–60, tyrosine 65, and isoleucine 112 each bind FAD; these read TWYW and DT. 57–59 provides a ligand contact to NADP(+); that stretch reads RAD. NADP(+)-binding positions include 186 to 192, 209 to 210, and tryptophan 492; these read TGSTGVQ and RS.

Belongs to the FAD-binding monooxygenase family. FAD is required as a cofactor.

It catalyses the reaction 1,6-dihydroxyphenazine + NADPH + O2 = 1,6-dihydroxyphenazine N(5)-oxide + NADP(+) + H2O. The enzyme catalyses 1,6-dihydroxyphenazine N(5)-oxide + NADPH + O2 = 1,6-dihydroxyphenazine N(5),N(10)-dioxide + NADP(+) + H2O. The catalysed reaction is 1-hydroxy-6-methoxyphenazine + NADPH + O2 = 1-hydroxy-6-methoxyphenazine N(10)-oxide + NADP(+) + H2O. It carries out the reaction quinolin-8-ol + NADPH + O2 = 8-hydroxyquinoline N-oxide + NADP(+) + H2O. Its function is as follows. Involved in the biosynthesis of phenazine natural products including myxin, an N(5),N(10)-dioxide phenazine antiobiotic, which has antimicrobial activity. Catalyzes the aromatic N-oxidations of phenazines, such as 1,6-dihydroxyphenazine (DHP), 1,6-dihydroxyphenazine N(5)-oxide (DHPO) and 1-hydroxy-6-methoxyphenazine to produce DHPO, iodinin (1,6-dihydroxyphenazine N(5),N(10)-dioxide) and 1-hydroxy-6-methoxyphenazine N(10)-oxide, respectively. Also catalyzes the N-oxidation of 8-hydroxyquinoline, but not 6-hydroxyquinoline (6-HQ), quinoline, quinoxaline, quinine and 2-phenylpyridine. This is Phenazine N-monooxygenase PhzNO1 from Lysobacter antibioticus.